The following is a 427-amino-acid chain: Caspase recruitment domain-containing protein 8 (427 aa).

The segment at 1–23 (MGIPTSSVSEEQESSEGQDSGDI) is disordered. The tract at residues 51 to 186 (FLGPEGNVDV…FYAVLEKPSF (136 aa)) is ZU5. One can recognise an FIIND domain in the interval 51–336 (FLGPEGNVDV…IQLGAASAPP (286 aa)). The tract at residues 187–336 (SLMGILLRIA…IQLGAASAPP (150 aa)) is UPA. The region spanning 336–426 (PAFSGAAFVK…YLVSYLRQQS (91 aa)) is the CARD domain.

As to quaternary structure, interacts with DPP9; leading to inhibit activation of the inflammasome. DPP9 acts via formation of a ternary complex, composed of a DPP9 homodimer, one full-length CARD8 protein, and one cleaved C-terminus of CARD8 (Caspase recruitment domain-containing protein 8, C-terminus). Interacts with DPP8; leading to inhibit activation of the inflammasome, probably via formation of a ternary complex with DPP8. Interacts with NLRP3. Interacts with IKBKG/NEMO. Interacts with DRAL. Binds to caspase-1 (CASP1), CARD16/pseudo-ICE and CARD18/ICEBERG. Interacts with NLRP2 (via NACHT domain). In terms of assembly, interacts with the C-terminal part of CARD8 (Caspase recruitment domain-containing protein 8, C-terminus) in absence of pathogens and other damage-associated signals. Interacts with the N-terminal part of CARD8 (Caspase recruitment domain-containing protein 8, N-terminus) in absence of pathogens and other damage-associated signals. Homomultimer; forms the CARD8 inflammasome polymeric complex, a filament composed of homopolymers of this form in response to pathogens and other damage-associated signals. The CARD8 inflammasome polymeric complex directly recruits pro-caspase-1 (proCASP1) independently of PYCARD/ASC. Interacts (via CARD domain) with CASP1 (via CARD domain); leading to CASP1 activation. Undergoes autocatalytic processing within the FIIND domain to generate the N-terminal and C-terminal parts, which are associated non-covalently in absence of pathogens and other damage-associated signals. Post-translationally, ubiquitinated by the N-end rule pathway in response to pathogens and other damage-associated signals, leading to its degradation by the proteasome and subsequent release of the cleaved C-terminal part of the protein (Caspase recruitment domain-containing protein 8, C-terminus), which polymerizes and forms the CARD8 inflammasome.

Its subcellular location is the cytoplasm. The protein resides in the nucleus. The protein localises to the inflammasome. Its activity is regulated as follows. CARD8 inflammasome is inhibited by DPP8 and DPP9, which sequester the C-terminal fragment of CARD8 (Caspase recruitment domain-containing protein 8, C-terminus) in a ternary complex, thereby preventing CARD8 oligomerization and activation. CARD8 inflammasome is activated by Val-boroPro (Talabostat, PT-100), an inhibitor of dipeptidyl peptidases DPP8 and DPP9. Val-boroPro relieves inhibition of DPP8 and/or DPP9 by inducing the proteasome-mediated destruction of the N-terminal part of CARD8, releasing its C-terminal part from autoinhibition. Its function is as follows. Inflammasome sensor, which mediates inflammasome activation in response to various pathogen-associated signals, leading to subsequent pyroptosis of CD4(+) T-cells and macrophages. Inflammasomes are supramolecular complexes that assemble in the cytosol in response to pathogens and other damage-associated signals and play critical roles in innate immunity and inflammation. Acts as a recognition receptor (PRR): recognizes specific pathogens and other damage-associated signals, such as Val-boroPro inhibitor, and mediates CARD8 inflammasome activation. In response to pathogen-associated signals, the N-terminal part of CARD8 is degraded by the proteasome, releasing the cleaved C-terminal part of the protein (Caspase recruitment domain-containing protein 8, C-terminus), which polymerizes to initiate the formation of the inflammasome complex: the CARD8 inflammasome directly recruits pro-caspase-1 (proCASP1) independently of PYCARD/ASC and promotes caspase-1 (CASP1) activation, which subsequently cleaves and activates inflammatory cytokines IL1B and IL18 and gasdermin-D (GSDMD), leading to pyroptosis. Also acts as a negative regulator of the NLRP3 inflammasome. May also act as an inhibitor of NF-kappa-B activation. Constitutes the precursor of the CARD8 inflammasome, which mediates autoproteolytic processing within the FIIND domain to generate the N-terminal and C-terminal parts, which are associated non-covalently in absence of pathogens and other damage-associated signals. In terms of biological role, regulatory part that prevents formation of the CARD8 inflammasome: in absence of pathogens and other damage-associated signals, interacts with the C-terminal part of CARD8 (Caspase recruitment domain-containing protein 8, C-terminus), preventing activation of the CARD8 inflammasome. In response to pathogen-associated signals, this part is ubiquitinated by the N-end rule pathway and degraded by the proteasome, releasing the cleaved C-terminal part of the protein, which polymerizes and forms the CARD8 inflammasome. Functionally, constitutes the active part of the CARD8 inflammasome. In absence of pathogens and other damage-associated signals, interacts with the N-terminal part of CARD8 (Caspase recruitment domain-containing protein 8, N-terminus), preventing activation of the CARD8 inflammasome. In response to pathogen-associated signals, the N-terminal part of CARD8 is degraded by the proteasome, releasing this form, which polymerizes to form the CARD8 inflammasome complex: the CARD8 inflammasome complex then directly recruits pro-caspase-1 (proCASP1) and promotes caspase-1 (CASP1) activation, leading to gasdermin-D (GSDMD) cleavage and subsequent pyroptosis. This Pongo abelii (Sumatran orangutan) protein is Caspase recruitment domain-containing protein 8.